Reading from the N-terminus, the 125-residue chain is MAETSSSSSQTTPETGTYAIVEASGQQFWVQPNRYYDLDRLHADVDAKITLDKVLLVKNGDAATIGKPYVQGASVELKVMAHRRGQKVIVYKMRPKKKTRRKNGHRQELTRVMVESISVGGKAIS.

Belongs to the bacterial ribosomal protein bL21 family. Part of the 50S ribosomal subunit. Contacts protein L20.

Its function is as follows. This protein binds to 23S rRNA in the presence of protein L20. The chain is Large ribosomal subunit protein bL21 from Synechococcus sp. (strain CC9311).